The chain runs to 465 residues: Cerebellar degeneration-related protein 2-like (465 aa).

Coiled coils occupy residues 38–143 (LLER…EQLR) and 188–265 (LEQE…TYLL). The interval 282–314 (APEADDPQPGRGDDLGAQDGVSSPAASPGHVVR) is disordered. Phosphoserine occurs at positions 308, 318, and 344. The stretch at 350–377 (MSILREVDEQYHALLEKYEELLSKCRQH) forms a coiled coil. The interval 382 to 417 (RHAGVQTSRPISRDSSWRDLRGGEEGQGEVKAGEKS) is disordered. The segment covering 392 to 405 (ISRDSSWRDLRGGE) has biased composition (basic and acidic residues).

The protein belongs to the CDR2 family.

This chain is Cerebellar degeneration-related protein 2-like (CDR2L), found in Homo sapiens (Human).